The chain runs to 510 residues: Maturase K (510 aa).

This sequence belongs to the intron maturase 2 family. MatK subfamily.

It localises to the plastid. Its subcellular location is the chloroplast. Functionally, usually encoded in the trnK tRNA gene intron. Probably assists in splicing its own and other chloroplast group II introns. The protein is Maturase K of Spirodela intermedia (Intermediate duckweed).